Reading from the N-terminus, the 790-residue chain is Cadherin-6 (790 aa).

Residues 1 to 18 (MRTYRYFLLLFWVGQPYP) form the signal peptide. Residues 19-53 (TFSTPLSKRTSGFPAKKRTLELSGNSKNELSRSKR) constitute a propeptide that is removed on maturation. 5 consecutive Cadherin domains span residues 54-159 (SWMW…EPIF), 160-268 (TKEV…PPRF), 269-383 (PQST…PPVF), 384-486 (SKLA…DNPP), and 487-608 (EFAE…LVHP). The Extracellular portion of the chain corresponds to 54–615 (SWMWNQFFLL…VHPTGLSTGA (562 aa)). An N-linked (GlcNAc...) asparagine glycan is attached at asparagine 255. Residues 261–291 (VNDNPPRFPQSTYQFKTPESSPPGTPIGRIK) form a disordered region. The segment covering 269 to 279 (PQSTYQFKTPE) has biased composition (polar residues). N-linked (GlcNAc...) asparagine glycans are attached at residues asparagine 399, asparagine 437, asparagine 455, and asparagine 536. Residues 616 to 636 (LIAILLCIVTLLVTVVLFAAL) traverse the membrane as a helical segment. Residues 637 to 790 (RRQRKKEPLI…YGGVDSDKDS (154 aa)) lie on the Cytoplasmic side of the membrane. Residues serine 786 and serine 790 each carry the phosphoserine modification.

It is found in the cell membrane. Cadherins are calcium-dependent cell adhesion proteins. They preferentially interact with themselves in a homophilic manner in connecting cells; cadherins may thus contribute to the sorting of heterogeneous cell types. The sequence is that of Cadherin-6 (CDH6) from Bos taurus (Bovine).